The following is a 467-amino-acid chain: ATP synthase subunit beta (467 aa).

Residue 150–157 (GGAGVGKT) participates in ATP binding.

Belongs to the ATPase alpha/beta chains family. In terms of assembly, F-type ATPases have 2 components, CF(1) - the catalytic core - and CF(0) - the membrane proton channel. CF(1) has five subunits: alpha(3), beta(3), gamma(1), delta(1), epsilon(1). CF(0) has three main subunits: a(1), b(2) and c(9-12). The alpha and beta chains form an alternating ring which encloses part of the gamma chain. CF(1) is attached to CF(0) by a central stalk formed by the gamma and epsilon chains, while a peripheral stalk is formed by the delta and b chains.

The protein resides in the cell inner membrane. The enzyme catalyses ATP + H2O + 4 H(+)(in) = ADP + phosphate + 5 H(+)(out). Functionally, produces ATP from ADP in the presence of a proton gradient across the membrane. The catalytic sites are hosted primarily by the beta subunits. This chain is ATP synthase subunit beta, found in Polaromonas sp. (strain JS666 / ATCC BAA-500).